Here is a 1456-residue protein sequence, read N- to C-terminus: ABC-type transporter eriD (1456 aa).

The tract at residues 1-65 (MAENEKVTYG…DPRMDPLSGK (65 aa)) is disordered. Residues 30–40 (SMTNASRSSVY) are compositionally biased toward polar residues. Residues 118 to 372 (LDIPGLARDI…FIDMGFECPP (255 aa)) form the ABC transporter 1 domain. Helical transmembrane passes span 481–501 (NFLTSVIGNFILALIISSIFY), 515–535 (ALLFFAILMNAFASSLEILQI), 561–581 (VLCDLPGKVIASFAFNLVLYF), 590–610 (GAFFTFYLFSLMCILVMSMIF), 623–643 (AMAPSSVILLALVIFTGFTIP), and 734–754 (ILFGFIAFFACTYLFATEFIA). The tract at residues 775-799 (EGASEDEEAGTGSTGTRTQEEPVDK) is disordered. One can recognise an ABC transporter 2 domain in the interval 813-1056 (FHWEDVIYDI…IIDYFEGQGA (244 aa)). Residue 849-856 (GASGAGKT) coordinates ATP. 7 helical membrane passes run 1148–1168 (YIYSKIFLVAGSNLLIGFSFF), 1184–1204 (VFMGLTVFGNLVNQIMPHFVT), 1233–1253 (LPWNTLAGVVLFFCWYYPVGM), 1269–1289 (LMFLLIWQFMLFTSTFAHMLI), 1301–1321 (IASLLFSLTFLFCGVLAGPSG), 1337–1357 (PFTYLVEAMVSVGVANAPAFC), and 1423–1443 (FGFLWVFILFNIGMAVFFYWL).

Belongs to the ABC transporter superfamily. ABCG family. PDR (TC 3.A.1.205) subfamily.

The protein resides in the membrane. Its function is as follows. ABC-type transporter; part of the gene cluster that mediates the biosynthesis of erinacines, cyathane-xylosides that show unique biological activities, including leishmanicidal activity, stimulating activity for nerve growth-factor synthesis, and agonistic activity toward the kappa opioid receptor. This chain is ABC-type transporter eriD, found in Hericium erinaceus (Lion's mane mushroom).